Here is a 755-residue protein sequence, read N- to C-terminus: Cellulose synthase-like protein B4 (755 aa).

2 helical membrane-spanning segments follow: residues 24-44 and 49-69; these read AVDL…ILHV and TVWI…LLIT. Catalysis depends on residues D136 and D461. 6 consecutive transmembrane segments (helical) span residues 533–556, 569–589, 615–635, 674–694, 702–722, and 733–753; these read AYLY…LPAY, VYLG…LWEF, LFSV…VFIV, FLPG…CLVG, GSGL…LPFL, and IPFS…VLSV.

This sequence belongs to the glycosyltransferase 2 family. Plant cellulose synthase-like B subfamily.

The protein resides in the golgi apparatus membrane. In terms of biological role, thought to be a Golgi-localized beta-glycan synthase that polymerize the backbones of noncellulosic polysaccharides (hemicelluloses) of plant cell wall. This is Cellulose synthase-like protein B4 (CSLB4) from Arabidopsis thaliana (Mouse-ear cress).